The chain runs to 203 residues: uncharacterized protein (203 aa).

The helical transmembrane segment at 89–109 threads the bilayer; that stretch reads CEIPFAACSVLSWSLPTIAAL.

The protein localises to the membrane. This is an uncharacterized protein from Saccharomyces cerevisiae (strain ATCC 204508 / S288c) (Baker's yeast).